The following is a 175-amino-acid chain: RNA pyrophosphohydrolase (175 aa).

In terms of domain architecture, Nudix hydrolase spans 6–149; that stretch reads GYRPNVGIVI…KRDVYRRVMK (144 aa). Positions 38–59 match the Nudix box motif; sequence GGINPGETPEQAMYRELFEEVG.

It belongs to the Nudix hydrolase family. RppH subfamily. A divalent metal cation serves as cofactor.

Its function is as follows. Accelerates the degradation of transcripts by removing pyrophosphate from the 5'-end of triphosphorylated RNA, leading to a more labile monophosphorylated state that can stimulate subsequent ribonuclease cleavage. In Yersinia enterocolitica serotype O:8 / biotype 1B (strain NCTC 13174 / 8081), this protein is RNA pyrophosphohydrolase.